The following is a 403-amino-acid chain: RNA-binding motif, single-stranded-interacting protein 1 (403 aa).

Residues 30–56 are disordered; sequence PAHPMAPPSPSTTSSNNNSSSSSNSGW. Over residues 40–54 the composition is skewed to low complexity; that stretch reads STTSSNNNSSSSSNS. 2 consecutive RRM domains span residues 62-135 and 141-226; these read TNLY…MAKQ and TNLY…FADG. Thr-208 is modified (phosphothreonine). The segment covering 382 to 395 has biased composition (polar residues); it reads GQQQVAVETSNDHS. Positions 382-403 are disordered; it reads GQQQVAVETSNDHSPYTFPPNK.

Ubiquitous. Expressed in all tissues except testis.

It is found in the nucleus. In terms of biological role, single-stranded DNA binding protein that interacts with the region upstream of the MYC gene. Binds specifically to the DNA sequence motif 5'-[AT]CT[AT][AT]T-3'. Probably has a role in DNA replication. This Mus musculus (Mouse) protein is RNA-binding motif, single-stranded-interacting protein 1 (Rbms1).